The following is a 104-amino-acid chain: uncharacterized protein (104 aa).

This is an uncharacterized protein from Haemophilus influenzae (strain ATCC 51907 / DSM 11121 / KW20 / Rd).